The primary structure comprises 975 residues: NLR family member X1 (975 aa).

A mitochondrion-targeting transit peptide spans 1 to 86 (MRWGHHLPRA…EAIQRHRRNL (86 aa)). The required for interaction with MAVS stretch occupies residues 75-556 (ATEAIQRHRR…RALPLLFNLI (482 aa)). The NACHT domain maps to 160–483 (QTVVLYGTVG…LRFFLAPCVE (324 aa)). Residue 166–173 (GTVGTGKS) participates in ATP binding. Residues 556 to 974 (IKVVPRVFGR…ALLEQLGSSG (419 aa)) form a required for the repression of MAVS-induced interferon signaling region. Positions 667 to 694 (RQVLPPSELLDHLFFHYEFQNQRFSAEV) constitute an LRRNT domain. 8 LRR repeats span residues 695–718 (LSSLRQLNLAGVRMTPVKCTVVAA), 724–747 (RHALDEVNLASCQLDPAGLRTLLP), 749–777 (FLRARKLGLQLNSLGPEACKDLRDLLLHD), 778–801 (QCQITTLRLSNNPLTAAGVAVLME), 811–834 (HLSLLHTGLGDEGLELLAAQLDRN), 835–857 (RQLQELNVAYNGAGDTAALALAR), 858–877 (AAREHPSLELLHLYFNELSS), and 878–899 (EGRQVLRDLGGAAEGGARVVVS). One can recognise an LRRCT domain in the interval 906 to 970 (VSEYWSVILS…GEVRALLEQL (65 aa)).

The protein belongs to the NLRP family. Homohexamer. Interacts with MAVS. Interacts with TUFM. As to quaternary structure, (Microbial infection) Interacts with influenza A virus protein PB1-F2. In terms of tissue distribution, ubiquitously expressed. Strongest expression in mammary gland, heart and muscle. Detected in HeLa, HEK293T, THP-1, HL-60, Raji and Jurkat cell lines (at protein level).

The protein localises to the mitochondrion outer membrane. Its function is as follows. Participates in antiviral signaling. Acts as a negative regulator of MAVS-mediated antiviral responses, through the inhibition of the virus-induced RLH (RIG-like helicase)-MAVS interaction. Instead, promotes autophagy by interacting with TUFM and subsequently recruiting the autophagy-related proteins ATG5 and ATG12. Also regulates MAVS-dependent NLRP3 inflammasome activation to attenuate apoptosis. Has no inhibitory function on NF-kappa-B signaling pathway, but enhances NF-kappa-B and JUN N-terminal kinase dependent signaling through the production of reactive oxygen species. Regulates viral mediated-inflammation and energy metabolism in a sex-dependent manner. In females, prevents uncontrolled inflammation and energy metabolism and thus, may contribute to the sex differences observed in infectious and inflammatory diseases. This chain is NLR family member X1 (NLRX1), found in Homo sapiens (Human).